The following is a 517-amino-acid chain: Protein IQ-DOMAIN 13 (517 aa).

Residues 1 to 11 (MGKKGSWFSAI) are calmodulin-binding. 2 disordered regions span residues 1 to 60 (MGKK…FLPI) and 81 to 147 (VFRP…PRAV). Residues 40-49 (KKKKGFGKKL) show a composition bias toward basic residues. The segment covering 89-99 (DRANSSSTSVA) has biased composition (polar residues). Pro residues predominate over residues 134–144 (PKPPSPKPPSP). IQ domains follow at residues 168-196 (KNAY…GLVR) and 197-218 (LQGV…KYMQ). Disordered stretches follow at residues 324-407 (QPFR…LTSC) and 425-452 (KLRA…SSFP). Residues 328–342 (LTPTRPSLSPQPQSS) are compositionally biased toward low complexity. A compositionally biased stretch (polar residues) spans 343 to 367 (NQNHFRLNNSFDTSTPNSSKSTFVT). The segment covering 432–448 (PKERMDRTPVSTNEKRR) has biased composition (basic and acidic residues).

Belongs to the IQD family. In terms of assembly, binds to multiple calmodulin (CaM) in the presence of Ca(2+) and CaM-like proteins. In terms of tissue distribution, expressed in vessels of roots, cotyledons and leaves, as well as in trichomes.

Its subcellular location is the cell membrane. The protein resides in the cytoplasm. It localises to the cytoskeleton. In terms of biological role, may be involved in cooperative interactions with calmodulins or calmodulin-like proteins. Recruits calmodulin proteins to microtubules, thus being a potential scaffold in cellular signaling and trafficking. Regulates the formation of oval xylem secondary cell-wall deposition pits through microtubule-dependent lateral inhibition of Rho GTPase domains, thus confining the area of active ROP domains within the lattice of the cortical microtubules. May associate with nucleic acids and regulate gene expression at the transcriptional or post-transcriptional level. The chain is Protein IQ-DOMAIN 13 from Arabidopsis thaliana (Mouse-ear cress).